A 216-amino-acid chain; its full sequence is uncharacterized protein (216 aa).

Residues 182–193 are compositionally biased toward polar residues; the sequence is STSNASVNSDDA. Residues 182–204 form a disordered region; that stretch reads STSNASVNSDDASTAELGPTSEE.

This is an uncharacterized protein from Caenorhabditis elegans.